The following is a 481-amino-acid chain: Autolysin (481 aa).

Residues 7 to 142 (KNEFIERLKT…LQDDNMLMIS (136 aa)) form the Peptidase C51 domain. Residues 198 to 323 (SNPKGIVIHN…NEFTSTSCPH (126 aa)) enclose the N-acetylmuramoyl-L-alanine amidase domain. The SH3b domain occupies 398 to 466 (EESARFTNGN…YLPIRTWNGS (69 aa)).

The protein belongs to the N-acetylmuramoyl-L-alanine amidase 2 family.

Its subcellular location is the secreted. The enzyme catalyses Hydrolyzes the link between N-acetylmuramoyl residues and L-amino acid residues in certain cell-wall glycopeptides.. Its function is as follows. Autolysins are involved in some important biological processes such as cell separation, cell-wall turnover, competence for genetic transformation, formation of the flagella and sporulation. Autolysin strictly depends on the presence of choline-containing cell walls for activity. The protein is Autolysin (lytA) of Staphylococcus aureus.